A 275-amino-acid polypeptide reads, in one-letter code: Large ribosomal subunit protein uL2 (275 aa).

The disordered stretch occupies residues 223 to 260 (VAMNPVDHPHGGGEGRTSGGRHPVSPWGLPTKGYKTRS).

This sequence belongs to the universal ribosomal protein uL2 family. As to quaternary structure, part of the 50S ribosomal subunit. Forms a bridge to the 30S subunit in the 70S ribosome.

In terms of biological role, one of the primary rRNA binding proteins. Required for association of the 30S and 50S subunits to form the 70S ribosome, for tRNA binding and peptide bond formation. It has been suggested to have peptidyltransferase activity; this is somewhat controversial. Makes several contacts with the 16S rRNA in the 70S ribosome. In Legionella pneumophila (strain Lens), this protein is Large ribosomal subunit protein uL2.